Consider the following 275-residue polypeptide: Phosphite import ATP-binding protein PxtA (275 aa).

Residues 11-252 (LRVDRLSVVY…QLERIYAGRS (242 aa)) form the ABC transporter domain. ATP is bound at residue 44-51 (GLSGAGKS). The segment at 251–275 (RSTTQPANAPAEPPVMLEPSLEMSR) is disordered.

It belongs to the ABC transporter superfamily. Phosphonates importer (TC 3.A.1.9.1) family. As to quaternary structure, the complex is composed of two ATP-binding proteins (PtxA), two transmembrane proteins (PtxC) and a solute-binding protein (PtxB).

It is found in the cell inner membrane. It catalyses the reaction phosphite(out) + ATP + H2O = phosphite(in) + ADP + phosphate + H(+). Part of the ABC transporter complex PtxABC involved in phosphite import. Responsible for energy coupling to the transport system. This Stutzerimonas stutzeri (Pseudomonas stutzeri) protein is Phosphite import ATP-binding protein PxtA (ptxA).